Reading from the N-terminus, the 405-residue chain is Probable tRNA sulfurtransferase (405 aa).

Residues 75-183 enclose the THUMP domain; the sequence is PRAAGAAADV…QNLAYVYLET (109 aa). ATP is bound by residues 201–202, K285, G307, and Q316; that span reads LM.

It belongs to the ThiI family.

The protein resides in the cytoplasm. The catalysed reaction is [ThiI sulfur-carrier protein]-S-sulfanyl-L-cysteine + a uridine in tRNA + 2 reduced [2Fe-2S]-[ferredoxin] + ATP + H(+) = [ThiI sulfur-carrier protein]-L-cysteine + a 4-thiouridine in tRNA + 2 oxidized [2Fe-2S]-[ferredoxin] + AMP + diphosphate. It catalyses the reaction [ThiS sulfur-carrier protein]-C-terminal Gly-Gly-AMP + S-sulfanyl-L-cysteinyl-[cysteine desulfurase] + AH2 = [ThiS sulfur-carrier protein]-C-terminal-Gly-aminoethanethioate + L-cysteinyl-[cysteine desulfurase] + A + AMP + 2 H(+). Its pathway is cofactor biosynthesis; thiamine diphosphate biosynthesis. Functionally, catalyzes the ATP-dependent transfer of a sulfur to tRNA to produce 4-thiouridine in position 8 of tRNAs, which functions as a near-UV photosensor. Also catalyzes the transfer of sulfur to the sulfur carrier protein ThiS, forming ThiS-thiocarboxylate. This is a step in the synthesis of thiazole, in the thiamine biosynthesis pathway. The sulfur is donated as persulfide by IscS. This Methanosarcina mazei (strain ATCC BAA-159 / DSM 3647 / Goe1 / Go1 / JCM 11833 / OCM 88) (Methanosarcina frisia) protein is Probable tRNA sulfurtransferase.